Consider the following 419-residue polypeptide: MDKSLEEKLMEQGKKAKAASRFLATASTTLKNEALLKTADALEAQGAEIVAANAIDLELGEKQGLTPALLERLALNESRIKDMAQGLREIAALPDPVGEVLGMWRRPNGLEVGRIRTPIGVIGIIYESRPNVTADAAGLCLKAGNAILLRGGEEALNSNRIIARIIAQSAKDCGIPEGAVQLVDSEDRQAAVYMMKMNDYLDVLIPRGGKGLKQAVLEHASVPVIMTGMGNCHVYVDALADLSKAQKIVFNAKVQRPSVCNAAETLLVNAKIAGDFLPAMIAELKGAGVEIRGCERSREIVPDILPAREEDWDEEYLDLILAVKVLDSVEDAIEHINCHGTGHSEAIISEDYSSVRRFISAVDAAAVYANASTRFTDGNVFGFGAEMGISTQKLHARGPMGLQELTTTKFIIYGDGQIR.

It belongs to the gamma-glutamyl phosphate reductase family.

Its subcellular location is the cytoplasm. It carries out the reaction L-glutamate 5-semialdehyde + phosphate + NADP(+) = L-glutamyl 5-phosphate + NADPH + H(+). The protein operates within amino-acid biosynthesis; L-proline biosynthesis; L-glutamate 5-semialdehyde from L-glutamate: step 2/2. In terms of biological role, catalyzes the NADPH-dependent reduction of L-glutamate 5-phosphate into L-glutamate 5-semialdehyde and phosphate. The product spontaneously undergoes cyclization to form 1-pyrroline-5-carboxylate. The chain is Gamma-glutamyl phosphate reductase from Syntrophomonas wolfei subsp. wolfei (strain DSM 2245B / Goettingen).